The primary structure comprises 155 residues: 3-hydroxyacyl-[acyl-carrier-protein] dehydratase FabZ (155 aa).

H54 is a catalytic residue.

Belongs to the thioester dehydratase family. FabZ subfamily.

It localises to the cytoplasm. The catalysed reaction is a (3R)-hydroxyacyl-[ACP] = a (2E)-enoyl-[ACP] + H2O. Its function is as follows. Involved in unsaturated fatty acids biosynthesis. Catalyzes the dehydration of short chain beta-hydroxyacyl-ACPs and long chain saturated and unsaturated beta-hydroxyacyl-ACPs. The chain is 3-hydroxyacyl-[acyl-carrier-protein] dehydratase FabZ from Burkholderia mallei (strain NCTC 10247).